Consider the following 480-residue polypeptide: Proline--tRNA ligase (480 aa).

This sequence belongs to the class-II aminoacyl-tRNA synthetase family. ProS type 3 subfamily. In terms of assembly, homodimer.

The protein localises to the cytoplasm. It carries out the reaction tRNA(Pro) + L-proline + ATP = L-prolyl-tRNA(Pro) + AMP + diphosphate. Its function is as follows. Catalyzes the attachment of proline to tRNA(Pro) in a two-step reaction: proline is first activated by ATP to form Pro-AMP and then transferred to the acceptor end of tRNA(Pro). This chain is Proline--tRNA ligase, found in Alkaliphilus oremlandii (strain OhILAs) (Clostridium oremlandii (strain OhILAs)).